We begin with the raw amino-acid sequence, 104 residues long: MTNRLVLSGTVCRTPLRKVSPSGIPHCQFVLEHRSVQEEAGFHRQAWCQMPVIVSGHENQAITHSITVGSRITVQGFISCHKAKNGLSKMVLHAEQIELIDSGD.

Residues 1-101 (MTNRLVLSGT…LHAEQIELID (101 aa)) enclose the SSB domain.

The protein belongs to the PriB family. Homodimer. Interacts with PriA and DnaT. Component of the replication restart primosome. Primosome assembly occurs via a 'hand-off' mechanism. PriA binds to replication forks, subsequently PriB then DnaT bind; DnaT then displaces ssDNA to generate the helicase loading substrate.

In terms of biological role, involved in the restart of stalled replication forks, which reloads the replicative helicase on sites other than the origin of replication; the PriA-PriB pathway is the major replication restart pathway. During primosome assembly it facilitates complex formation between PriA and DnaT on DNA; stabilizes PriA on DNA. Stimulates the DNA unwinding activity of PriA helicase. The polypeptide is Replication restart protein PriB (Escherichia coli (strain ATCC 8739 / DSM 1576 / NBRC 3972 / NCIMB 8545 / WDCM 00012 / Crooks)).